A 364-amino-acid chain; its full sequence is Fructose-1,6-bisphosphatase class 1 2 (364 aa).

Residues Glu101, Asp123, Leu125, and Asp126 each contribute to the Mg(2+) site. Residues Asp126–Ser129 and Asn218 contribute to the substrate site. Mg(2+) is bound at residue Glu290.

This sequence belongs to the FBPase class 1 family. As to quaternary structure, homotetramer. Requires Mg(2+) as cofactor.

The protein resides in the cytoplasm. It catalyses the reaction beta-D-fructose 1,6-bisphosphate + H2O = beta-D-fructose 6-phosphate + phosphate. The protein operates within carbohydrate biosynthesis; gluconeogenesis. This Cupriavidus taiwanensis (strain DSM 17343 / BCRC 17206 / CCUG 44338 / CIP 107171 / LMG 19424 / R1) (Ralstonia taiwanensis (strain LMG 19424)) protein is Fructose-1,6-bisphosphatase class 1 2.